Reading from the N-terminus, the 515-residue chain is Putative acetolactate synthase large subunit IlvX (515 aa).

E48 is a binding site for thiamine diphosphate. FAD-binding positions include F249–R269 and D283–D302. The segment at T357–A436 is thiamine pyrophosphate binding. Mg(2+) is bound by residues D407 and N434.

The protein belongs to the TPP enzyme family. In terms of assembly, heterodimer of large catalytic subunit and small regulatory subunit. It depends on Mg(2+) as a cofactor. Requires thiamine diphosphate as cofactor.

The catalysed reaction is 2 pyruvate + H(+) = (2S)-2-acetolactate + CO2. The protein operates within amino-acid biosynthesis; L-isoleucine biosynthesis; L-isoleucine from 2-oxobutanoate: step 1/4. Its pathway is amino-acid biosynthesis; L-valine biosynthesis; L-valine from pyruvate: step 1/4. Catalyzes the conversion of 2 pyruvate molecules into acetolactate in the first common step of the biosynthetic pathway of the branched-amino acids such as leucine, isoleucine, and valine. This Mycobacterium tuberculosis (strain ATCC 25618 / H37Rv) protein is Putative acetolactate synthase large subunit IlvX (ilvX).